A 277-amino-acid chain; its full sequence is 4-hydroxy-tetrahydrodipicolinate reductase (277 aa).

NAD(+) contacts are provided by residues 11-16 (GALGRM) and 110-112 (GTT). His-166 functions as the Proton donor/acceptor in the catalytic mechanism. His-167 contacts (S)-2,3,4,5-tetrahydrodipicolinate. The Proton donor role is filled by Lys-170. 176–177 (GT) serves as a coordination point for (S)-2,3,4,5-tetrahydrodipicolinate.

The protein belongs to the DapB family.

Its subcellular location is the cytoplasm. It catalyses the reaction (S)-2,3,4,5-tetrahydrodipicolinate + NAD(+) + H2O = (2S,4S)-4-hydroxy-2,3,4,5-tetrahydrodipicolinate + NADH + H(+). It carries out the reaction (S)-2,3,4,5-tetrahydrodipicolinate + NADP(+) + H2O = (2S,4S)-4-hydroxy-2,3,4,5-tetrahydrodipicolinate + NADPH + H(+). The protein operates within amino-acid biosynthesis; L-lysine biosynthesis via DAP pathway; (S)-tetrahydrodipicolinate from L-aspartate: step 4/4. In terms of biological role, catalyzes the conversion of 4-hydroxy-tetrahydrodipicolinate (HTPA) to tetrahydrodipicolinate. The sequence is that of 4-hydroxy-tetrahydrodipicolinate reductase from Synechococcus sp. (strain CC9902).